The chain runs to 552 residues: Hyaluronan synthase 2 (552 aa).

The Cytoplasmic portion of the chain corresponds to 1–11 (MHCERFLCVLR). The chain crosses the membrane as a helical span at residues 12–32 (IIGTTLFGVSLLLGITAAYIV). Topologically, residues 33-45 (GYQFIQTDNYYFS) are extracellular. A helical transmembrane segment spans residues 46–66 (FGLYGAFLASHLIIQSLFAFL). Residues 67–374 (EHRKMKKSLE…NAMWFHKHHL (308 aa)) lie on the Cytoplasmic side of the membrane. Threonine 110 is modified (phosphothreonine). A Glycyl lysine isopeptide (Lys-Gly) (interchain with G-Cter in ubiquitin) cross-link involves residue lysine 190. Serine 221 carries an O-linked (GlcNAc) serine glycan. Residue threonine 328 is modified to Phosphothreonine. Residues 375–395 (WMTYEAVITGFFPFFLIATVI) traverse the membrane as a helical segment. The Extracellular portion of the chain corresponds to 396 to 402 (QLFYRGK). Residues 403-423 (IWNILLFLLTVQLVGLIKSSF) form a helical membrane-spanning segment. Residues 424 to 429 (ASCLRG) lie on the Cytoplasmic side of the membrane. A helical transmembrane segment spans residues 430–450 (NIVMVFMSLYSVLYMSSLLPA). Residues 451 to 475 (KMFAIATINKAGWGTSGRKTIVVNF) lie on the Extracellular side of the membrane. A helical membrane pass occupies residues 476–496 (IGLIPVSVWFTILLGGVIFTI). Residues 497–510 (YKESKKPFSESKQT) lie on the Cytoplasmic side of the membrane. The chain crosses the membrane as a helical span at residues 511 to 531 (VLIVGTLIYACYWVVLLTLYV). The Extracellular portion of the chain corresponds to 532–552 (VLINKCGRRKKGQQYDMVLDV).

The protein belongs to the NodC/HAS family. As to quaternary structure, homodimer; dimerization promotes enzymatic activity. Forms heterodimer with HAS3. Forms heterodimer with HAS1. Mg(2+) is required as a cofactor. In terms of processing, phosphorylation at Thr-328 is essential for hyaluronan synthase activity. Post-translationally, O-GlcNAcylation at Ser-221 increases the stability of HAS2 and plasma membrane localization. Ubiquitination at Lys-190; this ubiquitination is essential for hyaluronan synthase activity and homo- or hetero-oligomerization. Can also be poly-ubiquitinated. Deubiquitinated by USP17L22/USP17 and USP4. USP17L22/USP17 efficiently removes 'Lys-63'- and 'Lys-48'-linked polyubiquitin chains, whereas USP4 preferentially removes monoubiquitination and, partially, both 'Lys-63'- and 'Lys-48'-linked polyubiquitin chain.

It is found in the cell membrane. The protein localises to the endoplasmic reticulum membrane. It localises to the vesicle. Its subcellular location is the golgi apparatus membrane. The protein resides in the lysosome. The catalysed reaction is [hyaluronan](n) + UDP-N-acetyl-alpha-D-glucosamine = N-acetyl-beta-D-glucosaminyl-(1-&gt;4)-[hyaluronan](n) + UDP + H(+). The enzyme catalyses N-acetyl-beta-D-glucosaminyl-(1-&gt;4)-[hyaluronan](n) + UDP-alpha-D-glucuronate = [hyaluronan](n+1) + UDP + H(+). The protein operates within glycan biosynthesis; hyaluronan biosynthesis. Functionally, catalyzes the addition of GlcNAc or GlcUA monosaccharides to the nascent hyaluronan polymer. Therefore, it is essential to hyaluronan synthesis a major component of most extracellular matrices that has a structural role in tissues architectures and regulates cell adhesion, migration and differentiation. This is one of three isoenzymes responsible for cellular hyaluronan synthesis and it is particularly responsible for the synthesis of high molecular mass hyaluronan. The chain is Hyaluronan synthase 2 (Has2) from Rattus norvegicus (Rat).